A 616-amino-acid polypeptide reads, in one-letter code: Dihydroxy-acid dehydratase (616 aa).

Asp-81 is a Mg(2+) binding site. Position 122 (Cys-122) interacts with [2Fe-2S] cluster. Positions 123 and 124 each coordinate Mg(2+). Lys-124 is modified (N6-carboxylysine). Cys-195 is a [2Fe-2S] cluster binding site. Glu-491 contacts Mg(2+). The active-site Proton acceptor is Ser-517.

The protein belongs to the IlvD/Edd family. In terms of assembly, homodimer. [2Fe-2S] cluster serves as cofactor. Requires Mg(2+) as cofactor.

It catalyses the reaction (2R)-2,3-dihydroxy-3-methylbutanoate = 3-methyl-2-oxobutanoate + H2O. The enzyme catalyses (2R,3R)-2,3-dihydroxy-3-methylpentanoate = (S)-3-methyl-2-oxopentanoate + H2O. The protein operates within amino-acid biosynthesis; L-isoleucine biosynthesis; L-isoleucine from 2-oxobutanoate: step 3/4. Its pathway is amino-acid biosynthesis; L-valine biosynthesis; L-valine from pyruvate: step 3/4. Functionally, functions in the biosynthesis of branched-chain amino acids. Catalyzes the dehydration of (2R,3R)-2,3-dihydroxy-3-methylpentanoate (2,3-dihydroxy-3-methylvalerate) into 2-oxo-3-methylpentanoate (2-oxo-3-methylvalerate) and of (2R)-2,3-dihydroxy-3-methylbutanoate (2,3-dihydroxyisovalerate) into 2-oxo-3-methylbutanoate (2-oxoisovalerate), the penultimate precursor to L-isoleucine and L-valine, respectively. The sequence is that of Dihydroxy-acid dehydratase from Pectobacterium atrosepticum (strain SCRI 1043 / ATCC BAA-672) (Erwinia carotovora subsp. atroseptica).